The chain runs to 526 residues: Glutamate--cysteine ligase (526 aa).

This sequence belongs to the glutamate--cysteine ligase type 1 family. Type 1 subfamily.

It catalyses the reaction L-cysteine + L-glutamate + ATP = gamma-L-glutamyl-L-cysteine + ADP + phosphate + H(+). The protein operates within sulfur metabolism; glutathione biosynthesis; glutathione from L-cysteine and L-glutamate: step 1/2. This chain is Glutamate--cysteine ligase, found in Proteus mirabilis (strain HI4320).